Here is a 284-residue protein sequence, read N- to C-terminus: WUSCHEL-related homeobox 10 (284 aa).

The tract at residues 1-43 (MDRTATASWEVMSRRGEQQQQLMMQAPASHNGGSGGGEPARSR) is disordered. The segment at residues 39-103 (PARSRWAPKP…NRRSRSRRRA (65 aa)) is a DNA-binding region (homeobox; WUS-type).

Belongs to the WUS homeobox family.

It is found in the nucleus. Transcription factor which may be involved in developmental processes. The polypeptide is WUSCHEL-related homeobox 10 (WOX10) (Oryza sativa subsp. japonica (Rice)).